Reading from the N-terminus, the 303-residue chain is Mycothiol acetyltransferase (303 aa).

2 N-acetyltransferase domains span residues 6-134 (TSLA…VEGD) and 154-303 (NEAY…QSSS). A 1D-myo-inositol 2-(L-cysteinylamino)-2-deoxy-alpha-D-glucopyranoside-binding site is contributed by E37. Acetyl-CoA-binding positions include 75 to 77 (VVV) and 83 to 88 (RQGYGS). 1D-myo-inositol 2-(L-cysteinylamino)-2-deoxy-alpha-D-glucopyranoside contacts are provided by E180, K221, and E233. Residues 237-239 (VGL) and 244-250 (RRRGLGD) each bind acetyl-CoA. Residue Y271 participates in 1D-myo-inositol 2-(L-cysteinylamino)-2-deoxy-alpha-D-glucopyranoside binding. 276-281 (NESARR) is a binding site for acetyl-CoA.

Belongs to the acetyltransferase family. MshD subfamily. In terms of assembly, monomer.

The enzyme catalyses 1D-myo-inositol 2-(L-cysteinylamino)-2-deoxy-alpha-D-glucopyranoside + acetyl-CoA = mycothiol + CoA + H(+). Catalyzes the transfer of acetyl from acetyl-CoA to desacetylmycothiol (Cys-GlcN-Ins) to form mycothiol. The protein is Mycothiol acetyltransferase of Corynebacterium diphtheriae (strain ATCC 700971 / NCTC 13129 / Biotype gravis).